Consider the following 36-residue polypeptide: Pancreatic polypeptide (36 aa).

Tyrosine 36 bears the Tyrosine amide mark.

The protein belongs to the NPY family.

The protein localises to the secreted. Hormone secreted by pancreatic cells that acts as a regulator of pancreatic and gastrointestinal functions probably by signaling through the G protein-coupled receptor NPY4R2. This is Pancreatic polypeptide (PPY) from Erinaceus europaeus (Western European hedgehog).